Reading from the N-terminus, the 187-residue chain is UPF0301 protein YPTS_3341 (187 aa).

It belongs to the UPF0301 (AlgH) family.

The protein is UPF0301 protein YPTS_3341 of Yersinia pseudotuberculosis serotype IB (strain PB1/+).